A 66-amino-acid chain; its full sequence is Antimicrobial peptide Eval967 (66 aa).

An N-terminal signal peptide occupies residues 1–22; the sequence is MKFSALLPVFFLLLAVIDYCQA. A Leucine amide modification is found at Leu-36. The propeptide occupies 37–66; sequence GKRDVKTQKYVDIKRRDLDLDDMLSKLFED.

It belongs to the non-disulfide-bridged peptide (NDBP) superfamily. Short antimicrobial peptide (group 4) family. Expressed by the venom gland.

It localises to the secreted. Its function is as follows. Probable antimicrobial peptide. Has no inhibitory activity against herpes simplex virus type 1 (HSV-1). This is Antimicrobial peptide Eval967 from Euscorpiops validus (Scorpion).